The primary structure comprises 822 residues: Putative endoplasmic reticulum metallopeptidase 1 (822 aa).

Topologically, residues M1–N14 are cytoplasmic. A helical transmembrane segment spans residues T15–F35. Residues H36 to K365 are Lumenal-facing. A glycan (N-linked (GlcNAc...) asparagine) is linked at N146. H161 and D173 together coordinate Zn(2+). Residue E207 is the Proton acceptor of the active site. Zn(2+)-binding residues include E208 and E234. N-linked (GlcNAc...) asparagine glycosylation occurs at N291. Residue H307 participates in Zn(2+) binding. Residues L366–L384 traverse the membrane as a helical segment. At R385–T392 the chain is on the cytoplasmic side. A helical membrane pass occupies residues V393–A413. The Lumenal segment spans residues Y414–Y431. A helical transmembrane segment spans residues W432 to F452. Residues K453–T463 lie on the Cytoplasmic side of the membrane. The helical transmembrane segment at I464–I484 threads the bilayer. Position 485 (D485) is a topological domain, lumenal. A helical membrane pass occupies residues F486–H506. Over P507–S514 the chain is Cytoplasmic. Residues I515 to L535 form a helical membrane-spanning segment. Residues T536–N547 lie on the Lumenal side of the membrane. Residues V548–I568 form a helical membrane-spanning segment. Topologically, residues Q569–C575 are cytoplasmic. The chain crosses the membrane as a helical span at residues C576–A596. Over K597–E822 the chain is Lumenal. N-linked (GlcNAc...) asparagine glycosylation is found at N617, N682, N706, and N758.

The protein belongs to the peptidase M28 family. M28B subfamily. The cofactor is Zn(2+).

It localises to the endoplasmic reticulum membrane. This is Putative endoplasmic reticulum metallopeptidase 1 from Schizosaccharomyces pombe (strain 972 / ATCC 24843) (Fission yeast).